Reading from the N-terminus, the 88-residue chain is Large ribosomal subunit protein bL31B (88 aa).

This sequence belongs to the bacterial ribosomal protein bL31 family. Type B subfamily. As to quaternary structure, part of the 50S ribosomal subunit.

This chain is Large ribosomal subunit protein bL31B, found in Pasteurella multocida (strain Pm70).